Reading from the N-terminus, the 386-residue chain is MKKLAILGSTGSIGVSTLDIVAAHPDKFQVVALTAGGNLDLLKKQIEEFSPQLVAVLNEELAQKLQQMLSGKGPAILHGVEGMIAAATAADADMVVAAIVGAAGLVPTAAAIKAGKDIALANKETLVTAGRLIMDMVKAHGVKLYPVDSEHSAVFQSLQGHRMEDVKQIILTASGGPFFTWPAEKLAQVTVSDALNHPNWSMGQKITIDSASMMNKGLEVIEARWLFDIPAEKIAVNIHPQSIIHSMVEYIDGCVMAQLGIPDMKAPIAYALTYPGRVPTGVKPLDLTALSGLTFFNPDYSRFPALKLAYRALEDGESMPTVMNAANEVAVGAFLNGRIKFTAIAEAIEKTMDFHQPHLLNTIEEVLLVDRWGREKCKELLGIDKQ.

Residues T10, G11, S12, I13, G36, N38, and N122 each coordinate NADPH. K123 provides a ligand contact to 1-deoxy-D-xylulose 5-phosphate. Residue E124 coordinates NADPH. D148 contributes to the Mn(2+) binding site. Positions 149, 150, 174, and 197 each coordinate 1-deoxy-D-xylulose 5-phosphate. Mn(2+) is bound at residue E150. Residue G203 participates in NADPH binding. The 1-deoxy-D-xylulose 5-phosphate site is built by S210, N215, K216, and E219. E219 serves as a coordination point for Mn(2+).

It belongs to the DXR family. Mg(2+) serves as cofactor. The cofactor is Mn(2+).

It catalyses the reaction 2-C-methyl-D-erythritol 4-phosphate + NADP(+) = 1-deoxy-D-xylulose 5-phosphate + NADPH + H(+). The protein operates within isoprenoid biosynthesis; isopentenyl diphosphate biosynthesis via DXP pathway; isopentenyl diphosphate from 1-deoxy-D-xylulose 5-phosphate: step 1/6. Its function is as follows. Catalyzes the NADPH-dependent rearrangement and reduction of 1-deoxy-D-xylulose-5-phosphate (DXP) to 2-C-methyl-D-erythritol 4-phosphate (MEP). The chain is 1-deoxy-D-xylulose 5-phosphate reductoisomerase from Geotalea uraniireducens (strain Rf4) (Geobacter uraniireducens).